Here is a 209-residue protein sequence, read N- to C-terminus: Large ribosomal subunit protein uL3 (209 aa).

A disordered region spans residues 126-148 (HGQSRGPMAHGSRYHRRPGSMGP).

It belongs to the universal ribosomal protein uL3 family. In terms of assembly, part of the 50S ribosomal subunit. Forms a cluster with proteins L14 and L19.

One of the primary rRNA binding proteins, it binds directly near the 3'-end of the 23S rRNA, where it nucleates assembly of the 50S subunit. The sequence is that of Large ribosomal subunit protein uL3 from Listeria monocytogenes serotype 4b (strain CLIP80459).